A 282-amino-acid chain; its full sequence is Lipoyl synthase (282 aa).

7 residues coordinate [4Fe-4S] cluster: C37, C42, C48, C63, C67, C70, and S275. Positions 49–264 (WSRGTATFMI…RLVGIEKGFR (216 aa)) constitute a Radical SAM core domain.

It belongs to the radical SAM superfamily. Lipoyl synthase family. [4Fe-4S] cluster serves as cofactor.

Its subcellular location is the cytoplasm. It catalyses the reaction [[Fe-S] cluster scaffold protein carrying a second [4Fe-4S](2+) cluster] + N(6)-octanoyl-L-lysyl-[protein] + 2 oxidized [2Fe-2S]-[ferredoxin] + 2 S-adenosyl-L-methionine + 4 H(+) = [[Fe-S] cluster scaffold protein] + N(6)-[(R)-dihydrolipoyl]-L-lysyl-[protein] + 4 Fe(3+) + 2 hydrogen sulfide + 2 5'-deoxyadenosine + 2 L-methionine + 2 reduced [2Fe-2S]-[ferredoxin]. The protein operates within protein modification; protein lipoylation via endogenous pathway; protein N(6)-(lipoyl)lysine from octanoyl-[acyl-carrier-protein]: step 2/2. Catalyzes the radical-mediated insertion of two sulfur atoms into the C-6 and C-8 positions of the octanoyl moiety bound to the lipoyl domains of lipoate-dependent enzymes, thereby converting the octanoylated domains into lipoylated derivatives. This Porphyromonas gingivalis (strain ATCC BAA-308 / W83) protein is Lipoyl synthase.